The primary structure comprises 118 residues: Large ribosomal subunit protein bL19 (118 aa).

Belongs to the bacterial ribosomal protein bL19 family.

This protein is located at the 30S-50S ribosomal subunit interface and may play a role in the structure and function of the aminoacyl-tRNA binding site. The polypeptide is Large ribosomal subunit protein bL19 (Onion yellows phytoplasma (strain OY-M)).